The sequence spans 640 residues: DNA mismatch repair protein MutL (640 aa).

2 disordered regions span residues 332–353 (PNVQ…FNFP) and 408–431 (PAHT…TFHD).

Belongs to the DNA mismatch repair MutL/HexB family.

Its function is as follows. This protein is involved in the repair of mismatches in DNA. It is required for dam-dependent methyl-directed DNA mismatch repair. May act as a 'molecular matchmaker', a protein that promotes the formation of a stable complex between two or more DNA-binding proteins in an ATP-dependent manner without itself being part of a final effector complex. The sequence is that of DNA mismatch repair protein MutL from Chloroherpeton thalassium (strain ATCC 35110 / GB-78).